The following is a 209-amino-acid chain: Ribosomal RNA large subunit methyltransferase E (209 aa).

S-adenosyl-L-methionine-binding residues include glycine 63, tryptophan 65, aspartate 83, aspartate 99, and aspartate 124. Lysine 164 acts as the Proton acceptor in catalysis.

Belongs to the class I-like SAM-binding methyltransferase superfamily. RNA methyltransferase RlmE family.

The protein resides in the cytoplasm. The enzyme catalyses uridine(2552) in 23S rRNA + S-adenosyl-L-methionine = 2'-O-methyluridine(2552) in 23S rRNA + S-adenosyl-L-homocysteine + H(+). In terms of biological role, specifically methylates the uridine in position 2552 of 23S rRNA at the 2'-O position of the ribose in the fully assembled 50S ribosomal subunit. In Aeromonas salmonicida (strain A449), this protein is Ribosomal RNA large subunit methyltransferase E.